The primary structure comprises 470 residues: O-acyltransferase pboC (470 aa).

Active-site proton acceptor residues include H149 and D386.

This sequence belongs to the plant acyltransferase family. In terms of assembly, monomer.

The protein operates within secondary metabolite biosynthesis. In terms of biological role, O-acetyltransferase; part of the gene cluster that mediates the biosynthesis of protubonine B, a hydroxylated and diacetylated cyclo-L-Trp-L-Leu derivative. Within the pathway, pboC catalyzes the acetylation of protubonine D at the hydroxy group to produce protubonine C. The first step of the protubonine B synthesis is performed by the nonribosomal peptide synthetase pboA that catalyzes the formation of cyclo-L-Trp-L-Leu by condensing L-Leu with L-Trp. The flavin-dependent monooxygenase pboD is responsible for hydroxylation at C-3 of the indole ring and subsequent formation of the pyrrolidine ring, leadind to protubonine D. Protubonine D is further diacetylated by two acetyltransferases, pboB and pboC, to form the final product protubonine B via protubonine C. This Aspergillus ustus protein is O-acyltransferase pboC.